The primary structure comprises 103 residues: Large ribosomal subunit protein bL21 (103 aa).

Belongs to the bacterial ribosomal protein bL21 family. Part of the 50S ribosomal subunit. Contacts protein L20.

This protein binds to 23S rRNA in the presence of protein L20. This Kineococcus radiotolerans (strain ATCC BAA-149 / DSM 14245 / SRS30216) protein is Large ribosomal subunit protein bL21.